A 178-amino-acid chain; its full sequence is Endoribonuclease YbeY (178 aa).

His-118, His-122, and His-128 together coordinate Zn(2+). The segment at 158-178 is disordered; the sequence is ADRQSEKDRRLLDKSRYFDEP.

This sequence belongs to the endoribonuclease YbeY family. The cofactor is Zn(2+).

The protein localises to the cytoplasm. Functionally, single strand-specific metallo-endoribonuclease involved in late-stage 70S ribosome quality control and in maturation of the 3' terminus of the 16S rRNA. This chain is Endoribonuclease YbeY, found in Mycolicibacterium smegmatis (strain ATCC 700084 / mc(2)155) (Mycobacterium smegmatis).